Reading from the N-terminus, the 245-residue chain is MSQSTSVLRRNGFTFKQFFVAHDRCAMKVGTDGILLGAWAPVAGVKRCLDIGAGSGLLALMLAQRTDDSVIIDAVELESEAAAQAQENINQSPWAERINVHTADIQQWITQQTVRFDLIISNPPYYQQGVECATPQREQARYTTTLDHPSLLTCAAECITEEGFFCVVLPEQIGNGFTELALSMGWHLRLRTDVAENEARLPHRVLLAFSPQAGECFSDRLVIRGPDQNYSEAYTALTQAFYLFM.

Belongs to the methyltransferase superfamily. tRNA (adenine-N(6)-)-methyltransferase family.

It localises to the cytoplasm. The catalysed reaction is adenosine(37) in tRNA1(Val) + S-adenosyl-L-methionine = N(6)-methyladenosine(37) in tRNA1(Val) + S-adenosyl-L-homocysteine + H(+). Functionally, specifically methylates the adenine in position 37 of tRNA(1)(Val) (anticodon cmo5UAC). The protein is tRNA1(Val) (adenine(37)-N6)-methyltransferase of Escherichia coli O139:H28 (strain E24377A / ETEC).